A 1355-amino-acid chain; its full sequence is Ecdysone-induced protein 75B, isoform A (1355 aa).

Disordered stretches follow at residues 60–91 (QHQPMHQLHHQHQHQHQHQQQAKSQQLKQQHS), 126–228 (RLKN…DSSY), 248–268 (ELEQQQTTGGSNAQQQVEAKP), and 308–344 (ATQQQQQQQQQHQHQQQRRDSSDSNCSLMSNSSNSSA). Basic residues predominate over residues 66-76 (QLHHQHQHQHQ). Composition is skewed to low complexity over residues 77–91 (HQQQAKSQQLKQQHS) and 143–179 (TLVKTTTTSNSNSNNTQTTNSISQQQQQHQIVLQHQQ). The span at 200–213 (SGIDEDSPNSDEDC) shows a compositional bias: acidic residues. Composition is skewed to polar residues over residues 218-228 (PAGTSLEDSSY) and 254-264 (TTGGSNAQQQV). Low complexity-rich tracts occupy residues 308–321 (ATQQQQQQQQQHQH) and 330–344 (DSNCSLMSNSSNSSA). Residues 384-474 (SQLNYLCQKF…VGMSRDAVRF (91 aa)) constitute a DNA-binding region (nuclear receptor). Residues 387-421 (NYLCQKFDEKLDTALSNSSANTGRNTPAVTANEDA) form an NR C4-type; degenerate zinc finger. The NR C4-type zinc finger occupies 438-457 (CTKNQQCSILRINRNRCQYC). In terms of domain architecture, NR LBD spans 508 to 756 (DQPRLLAAVL…QQMWSMEDGN (249 aa)). Disordered regions lie at residues 780-821 (KSPL…SALA), 927-964 (LDSPTDSGIESGNEKNECKAVSSGGSSSCSSPRSSVDD), 987-1007 (VSVSPVRSPQPSTSSHLKRQI), 1051-1117 (AEAD…SSHS), 1147-1260 (ENST…SNSA), and 1312-1344 (TVTASNGGPPSAAASPAPSSSPPASVGSPNPGL). 5 stretches are compositionally biased toward low complexity: residues 797 to 809 (GSPSSSQPQGVSL), 948 to 960 (SSGGSSSCSSPRS), 987 to 1001 (VSVSPVRSPQPSTSS), 1053 to 1098 (ADAS…AQSQ), and 1106 to 1117 (SSPKASMASSHS). 2 stretches are compositionally biased toward polar residues: residues 1149 to 1162 (STAASSTTNGVGNR) and 1174 to 1196 (AVQNQQRWGSSSVITTTCQQRQQ). Low complexity-rich tracts occupy residues 1197–1233 (SVSPHSNGSSSSSSSSSSSSSSSSSTSSNCSSSSASS), 1242–1260 (STSNGTSAPASSSSGSNSA), and 1315–1343 (ASNGGPPSAAASPAPSSSPPASVGSPNPG).

The protein belongs to the nuclear hormone receptor family. NR1 subfamily.

The protein resides in the nucleus. In terms of biological role, implicated in the regulation of ecdysone-triggered gene hierarchies. Probably plays a key role in mediating the regulation of the larval molt by 20-OH-ecdysone. The polypeptide is Ecdysone-induced protein 75B, isoform A (Eip75B) (Drosophila melanogaster (Fruit fly)).